The following is a 58-amino-acid chain: Conotoxin Ar5.4 (58 aa).

Residues 1–20 constitute a propeptide that is removed on maturation; sequence RIQSDLIRAALEDADMKNEK.

Belongs to the conotoxin T superfamily. Contains 2 disulfide bonds that can be either 'C1-C3, C2-C4' or 'C1-C4, C2-C3', since these disulfide connectivities have been observed for conotoxins with cysteine framework V (for examples, see AC P0DQQ7 and AC P81755). Expressed by the venom duct.

The protein resides in the secreted. The polypeptide is Conotoxin Ar5.4 (Conus arenatus (Sand-dusted cone)).